The primary structure comprises 88 residues: Apolipoprotein C-I (88 aa).

The signal sequence occupies residues 1–26 (MRLILSLPVLAVVLAMVLEGPAPAQA).

It belongs to the apolipoprotein C1 family.

The protein resides in the secreted. In terms of biological role, inhibitor of lipoprotein binding to the low density lipoprotein (LDL) receptor, LDL receptor-related protein, and very low density lipoprotein (VLDL) receptor. Associates with high density lipoproteins (HDL) and the triacylglycerol-rich lipoproteins in the plasma and makes up about 10% of the protein of the VLDL and 2% of that of HDL. Appears to interfere directly with fatty acid uptake and is also the major plasma inhibitor of cholesteryl ester transfer protein (CETP). Binds free fatty acids and reduces their intracellular esterification. Modulates the interaction of APOE with beta-migrating VLDL and inhibits binding of beta-VLDL to the LDL receptor-related protein. This Cynopterus brachyotis (Lesser short-nosed fruit bat) protein is Apolipoprotein C-I (APOC1).